Consider the following 241-residue polypeptide: LAS seventeen-binding protein 1 (241 aa).

S2 carries the post-translational modification N-acetylserine. K41 participates in a covalent cross-link: Glycyl lysine isopeptide (Lys-Gly) (interchain with G-Cter in ubiquitin). Residue S48 is modified to Phosphoserine. The 60-residue stretch at 53–112 folds into the SH3 domain; the sequence is DTEEYVEALYDFEAQQDGDLSLKTGDKIQVLEKISPDWYRGKSNNKIGIFPANYVKPAFT. A Glycyl lysine isopeptide (Lys-Gly) (interchain with G-Cter in ubiquitin) cross-link involves residue K79. Phosphoserine is present on residues S114 and S116. Residue K118 forms a Glycyl lysine isopeptide (Lys-Gly) (interchain with G-Cter in ubiquitin) linkage. Residues 118 to 131 are compositionally biased toward low complexity; sequence KSAEAASSSTVSRP. Residues 118–213 are disordered; sequence KSAEAASSST…QQSSGASSAF (96 aa). The PY motif signature appears at 135-138; the sequence is PPSY. Residues 163–179 are compositionally biased toward pro residues; the sequence is APPPQQQQAPLPYPPPF. Over residues 180–213 the composition is skewed to low complexity; it reads TNYYQQPQQQYAPPSQQAPVEAQPQQSSGASSAF. K219 is covalently cross-linked (Glycyl lysine isopeptide (Lys-Gly) (interchain with G-Cter in ubiquitin)).

The protein belongs to the LSB1 family. Interacts with LAS17, RSP5 and SUP35. In terms of processing, ubiquitinated by RSP5.

It localises to the cytoplasm. The protein resides in the nucleus. The protein localises to the cytoskeleton. Its subcellular location is the actin patch. Involved in resistance to EDTA. The protein is LAS seventeen-binding protein 1 (LSB1) of Saccharomyces cerevisiae (strain ATCC 204508 / S288c) (Baker's yeast).